A 438-amino-acid polypeptide reads, in one-letter code: Putative cytochrome P450 140 (438 aa).

Cysteine 381 lines the heme pocket.

The protein belongs to the cytochrome P450 family. The cofactor is heme.

The sequence is that of Putative cytochrome P450 140 (cyp140) from Mycobacterium bovis (strain ATCC BAA-935 / AF2122/97).